Here is a 154-residue protein sequence, read N- to C-terminus: uncharacterized protein (154 aa).

Residues 13–128 (SKGVLLLRTL…VFTFVAVDNN (116 aa)) form the HotDog ACOT-type domain.

This sequence belongs to the acyl coenzyme A hydrolase family.

This is an uncharacterized protein from Haemophilus influenzae (strain ATCC 51907 / DSM 11121 / KW20 / Rd).